A 263-amino-acid chain; its full sequence is 4-hydroxy-2-oxo-heptane-1,7-dioate aldolase (263 aa).

H45 serves as the catalytic Proton acceptor. Position 147 (Q147) interacts with substrate. Residue E149 participates in a divalent metal cation binding. A174 and D175 together coordinate substrate. D175 is an a divalent metal cation binding site.

It belongs to the HpcH/HpaI aldolase family. As to quaternary structure, homohexamer; trimer of dimers. A divalent metal cation is required as a cofactor.

The catalysed reaction is 4-hydroxy-2-oxoheptanedioate = succinate semialdehyde + pyruvate. Its pathway is aromatic compound metabolism; 4-hydroxyphenylacetate degradation; pyruvate and succinate semialdehyde from 4-hydroxyphenylacetate: step 7/7. In terms of biological role, catalyzes the reversible retro-aldol cleavage of 4-hydroxy-2-ketoheptane-1,7-dioate (HKHD) to pyruvate and succinic semialdehyde. This Salmonella paratyphi A (strain ATCC 9150 / SARB42) protein is 4-hydroxy-2-oxo-heptane-1,7-dioate aldolase.